The following is a 123-amino-acid chain: Glucose starvation-inducible protein B (123 aa).

2 stretches are compositionally biased toward basic and acidic residues: residues Met-1–Tyr-29 and Ser-41–Tyr-109. Residues Met-1–Asp-123 form a disordered region. 5 repeat units span residues Gly-13–Ile-32, Gly-33–Ile-52, Gly-53–Ile-72, Gly-73–Ile-92, and Gly-93–Ile-112. The interval Gly-13–Arg-120 is 5 X 20 AA approximate tandem repeats.

Functionally, involved in an adaptive response to nutrient deprivation other than sporulation. This Bacillus subtilis (strain 168) protein is Glucose starvation-inducible protein B (gsiB).